A 93-amino-acid polypeptide reads, in one-letter code: Probable chloroethene reductive dehalogenase membrane anchor protein (93 aa).

A run of 3 helical transmembrane segments spans residues 3-23, 35-55, and 64-84; these read AIYFFLTIALAVGLTMLFTWF, WVLGILGLLLALFAIQHTYAS, and SAWIVGVIVLLLAVVPLLFAA.

The protein belongs to the PceB family.

It localises to the cell membrane. In terms of biological role, may act as a membrane anchor for the chloroethene reductive dehalogenase VcrA. This is Probable chloroethene reductive dehalogenase membrane anchor protein from Dehalococcoides mccartyi (strain VS).